The chain runs to 93 residues: Parbolysin P1 (93 aa).

3 cysteine pairs are disulfide-bonded: C16–C37, C22–C33, and C47–C60.

It belongs to the worm cytolysin family. In terms of tissue distribution, localized within the skin and proboscis and are most readily isolated from body mucus secretions.

It is found in the secreted. Functionally, cytolysin that shows hemolytic activity (on bovine erythrocytes, HC(50)=5.75 mg/ml). This hemolytic activity is completely inhibited by small unilamelar vesicles composed of PC/PG, PC/PI and PC/PS in 1:1 molar ratios (with at least 100 mg/ml concentration). The recombinant protein does not show hemolytic activity, suggesting that it is not properly folded or that it requires a free N-terminal end for its activity. The sequence is that of Parbolysin P1 from Parborlasia corrugatus (Antarctic nemertean worm).